The primary structure comprises 637 residues: DNA gyrase subunit B (637 aa).

The region spanning 420 to 534 (CEIYIVEGDS…EGHVFIAQPP (115 aa)) is the Toprim domain. Mg(2+) contacts are provided by Glu426, Asp499, and Asp501.

Belongs to the type II topoisomerase GyrB family. Heterotetramer, composed of two GyrA and two GyrB chains. In the heterotetramer, GyrA contains the active site tyrosine that forms a transient covalent intermediate with DNA, while GyrB binds cofactors and catalyzes ATP hydrolysis. The cofactor is Mg(2+). Mn(2+) is required as a cofactor. Requires Ca(2+) as cofactor.

Its subcellular location is the cytoplasm. It carries out the reaction ATP-dependent breakage, passage and rejoining of double-stranded DNA.. Functionally, a type II topoisomerase that negatively supercoils closed circular double-stranded (ds) DNA in an ATP-dependent manner to modulate DNA topology and maintain chromosomes in an underwound state. Negative supercoiling favors strand separation, and DNA replication, transcription, recombination and repair, all of which involve strand separation. Also able to catalyze the interconversion of other topological isomers of dsDNA rings, including catenanes and knotted rings. Type II topoisomerases break and join 2 DNA strands simultaneously in an ATP-dependent manner. The sequence is that of DNA gyrase subunit B from Clostridium acetobutylicum (strain ATCC 824 / DSM 792 / JCM 1419 / IAM 19013 / LMG 5710 / NBRC 13948 / NRRL B-527 / VKM B-1787 / 2291 / W).